A 134-amino-acid polypeptide reads, in one-letter code: Large ribosomal subunit protein uL24 (134 aa).

The protein belongs to the universal ribosomal protein uL24 family. As to quaternary structure, part of the 50S ribosomal subunit.

One of two assembly initiator proteins, it binds directly to the 5'-end of the 23S rRNA, where it nucleates assembly of the 50S subunit. Its function is as follows. Located at the polypeptide exit tunnel on the outside of the subunit. In Sulfolobus acidocaldarius (strain ATCC 33909 / DSM 639 / JCM 8929 / NBRC 15157 / NCIMB 11770), this protein is Large ribosomal subunit protein uL24.